Here is a 370-residue protein sequence, read N- to C-terminus: Histidinol-phosphate aminotransferase 1 (370 aa).

An N6-(pyridoxal phosphate)lysine modification is found at lysine 222.

The protein belongs to the class-II pyridoxal-phosphate-dependent aminotransferase family. Histidinol-phosphate aminotransferase subfamily. Homodimer. The cofactor is pyridoxal 5'-phosphate.

It carries out the reaction L-histidinol phosphate + 2-oxoglutarate = 3-(imidazol-4-yl)-2-oxopropyl phosphate + L-glutamate. The protein operates within amino-acid biosynthesis; L-histidine biosynthesis; L-histidine from 5-phospho-alpha-D-ribose 1-diphosphate: step 7/9. This Bacillus anthracis protein is Histidinol-phosphate aminotransferase 1 (hisC1).